We begin with the raw amino-acid sequence, 433 residues long: Phosphomethylpyrimidine synthase (433 aa).

Residues N69, M98, Y127, H163, 185–187, 226–229, and E265 contribute to the substrate site; these read SRG and DALR. Residue H269 participates in Zn(2+) binding. Position 292 (Y292) interacts with substrate. H333 serves as a coordination point for Zn(2+). [4Fe-4S] cluster contacts are provided by C409, C412, and C416.

This sequence belongs to the ThiC family. The cofactor is [4Fe-4S] cluster.

It carries out the reaction 5-amino-1-(5-phospho-beta-D-ribosyl)imidazole + S-adenosyl-L-methionine = 4-amino-2-methyl-5-(phosphooxymethyl)pyrimidine + CO + 5'-deoxyadenosine + formate + L-methionine + 3 H(+). The protein operates within cofactor biosynthesis; thiamine diphosphate biosynthesis. Catalyzes the synthesis of the hydroxymethylpyrimidine phosphate (HMP-P) moiety of thiamine from aminoimidazole ribotide (AIR) in a radical S-adenosyl-L-methionine (SAM)-dependent reaction. The polypeptide is Phosphomethylpyrimidine synthase (Finegoldia magna (strain ATCC 29328 / DSM 20472 / WAL 2508) (Peptostreptococcus magnus)).